Reading from the N-terminus, the 347-residue chain is D-alanine--D-alanine ligase (347 aa).

In terms of domain architecture, ATP-grasp spans 138-339; the sequence is KILCSHAGIP…YSQVIETILA (202 aa). 171-226 is an ATP binding site; it reads SDRFTFPLFVKPVDAGSSFGCTFVDFFEQLPVAIEHALQHGKSAIVEPALDAPEVF. Residues aspartate 296, glutamate 308, and asparagine 310 each coordinate Mg(2+).

The protein belongs to the D-alanine--D-alanine ligase family. Mg(2+) is required as a cofactor. Requires Mn(2+) as cofactor.

The protein localises to the cytoplasm. The catalysed reaction is 2 D-alanine + ATP = D-alanyl-D-alanine + ADP + phosphate + H(+). Its pathway is cell wall biogenesis; peptidoglycan biosynthesis. Cell wall formation. In Tropheryma whipplei (strain TW08/27) (Whipple's bacillus), this protein is D-alanine--D-alanine ligase.